A 389-amino-acid polypeptide reads, in one-letter code: UDP-D-apiose/UDP-D-xylose synthase 2 (389 aa).

NAD(+) contacts are provided by phenylalanine 28, isoleucine 29, aspartate 49, asparagine 76, isoleucine 77, and leucine 96. The UDP-alpha-D-glucuronate site is built by tyrosine 105, threonine 139, glutamate 141, arginine 182, and tyrosine 185. NAD(+) is bound by residues tyrosine 185 and lysine 189. Catalysis depends on tyrosine 185, which acts as the Proton acceptor. Asparagine 214 contributes to the UDP-alpha-D-glucuronate binding site. Positions 215 and 235 each coordinate NAD(+). 7 residues coordinate UDP-alpha-D-glucuronate: lysine 251, valine 253, arginine 260, tyrosine 331, tyrosine 335, aspartate 337, and arginine 341.

It belongs to the NAD(P)-dependent epimerase/dehydratase family. As to quaternary structure, homodimer and heterodimer with AXS1. It depends on NAD(+) as a cofactor. In terms of tissue distribution, widely expressed with stronger expression in dark-grown seedlings, leaves and stems, and lower levels in flowers, siliques, pistils, pollen and roots.

Its subcellular location is the cytoplasm. The enzyme catalyses UDP-alpha-D-glucuronate + H(+) = UDP-alpha-D-xylose + CO2. It carries out the reaction UDP-alpha-D-glucuronate + H(+) = UDP-alpha-D-apiose + CO2. Together with AXS1, catalyzes the conversion of UDP-D-glucuronate into a mixture of UDP-D-apiose (UDP-Api) as the main product and UDP-D-xylose to a lesser extent, via a cycle of oxidation and reduction. D-Apiose (3-C-hydroxymethyl-d-erythrose) is the only plant cell wall monosaccharide with a branched carbon skeleton and is found in rhamnogalacturonan II (RG-II), apiogalacturonan, and several apioglycosides. This chain is UDP-D-apiose/UDP-D-xylose synthase 2, found in Arabidopsis thaliana (Mouse-ear cress).